Reading from the N-terminus, the 936-residue chain is Protocadherin alpha-5 (936 aa).

The first 28 residues, 1-28, serve as a signal peptide directing secretion; sequence MVYSRRGSLGSRLLLLWLLLAYWKAGSG. Topologically, residues 29–696 are extracellular; sequence QLHYSIPEEA…GPEAALVDVN (668 aa). 6 consecutive Cadherin domains span residues 33 to 132, 156 to 241, 242 to 349, 350 to 454, 455 to 564, and 580 to 677; these read SIPE…PPRF, ASDL…APEF, DKSI…TPEM, AITT…APAF, AQPQ…APAL, and VPRS…APKA. Residue asparagine 264 is glycosylated (N-linked (GlcNAc...) asparagine). N-linked (GlcNAc...) asparagine glycosylation is present at asparagine 547. The chain crosses the membrane as a helical span at residues 697 to 717; the sequence is VYLIIAICAVSSLLVLTLLLY. Over 718 to 936 the chain is Cytoplasmic; it reads TALRCSAQPT…GNSTTDNSDQ (219 aa). 2 disordered regions span residues 759-793 and 816-936; these read SGEA…PDWR and AGPG…NSDQ. 5 PXXP repeats span residues 773–776, 785–788, 818–821, 873–876, and 877–890; these read PSLP, PRQP, PGGP, KFII, and PGSP…QEPT. A 5 X 4 AA repeats of P-X-X-P region spans residues 773 to 890; that stretch reads PSLPQGPTST…AIISIRQEPT (118 aa). The segment covering 774–786 has biased composition (polar residues); that stretch reads SLPQGPTSTDNPR. The segment covering 895-909 has biased composition (basic and acidic residues); the sequence is DKSDFITFGKKEETK.

The protein resides in the cell membrane. Its function is as follows. Potential calcium-dependent cell-adhesion protein. May be involved in the establishment and maintenance of specific neuronal connections in the brain. The polypeptide is Protocadherin alpha-5 (PCDHA5) (Homo sapiens (Human)).